A 101-amino-acid chain; its full sequence is uncharacterized protein (101 aa).

This is an uncharacterized protein from Gracula (BFDV).